Here is a 463-residue protein sequence, read N- to C-terminus: UDP-N-acetylmuramoyl-L-alanyl-D-glutamate--2,6-diaminopimelate ligase (463 aa).

Residue Thr-21 participates in UDP-N-acetyl-alpha-D-muramoyl-L-alanyl-D-glutamate binding. 94–100 (GTNGKTT) serves as a coordination point for ATP. Residues 137-138 (TT), Ser-164, Gln-170, and Arg-172 contribute to the UDP-N-acetyl-alpha-D-muramoyl-L-alanyl-D-glutamate site. Lys-204 is subject to N6-carboxylysine. Meso-2,6-diaminopimelate contacts are provided by residues Arg-358, 382-385 (DNPR), Gly-433, and Glu-437. Residues 382-385 (DNPR) carry the Meso-diaminopimelate recognition motif motif.

The protein belongs to the MurCDEF family. MurE subfamily. Mg(2+) serves as cofactor. In terms of processing, carboxylation is probably crucial for Mg(2+) binding and, consequently, for the gamma-phosphate positioning of ATP.

It localises to the cytoplasm. The catalysed reaction is UDP-N-acetyl-alpha-D-muramoyl-L-alanyl-D-glutamate + meso-2,6-diaminopimelate + ATP = UDP-N-acetyl-alpha-D-muramoyl-L-alanyl-gamma-D-glutamyl-meso-2,6-diaminopimelate + ADP + phosphate + H(+). It functions in the pathway cell wall biogenesis; peptidoglycan biosynthesis. Functionally, catalyzes the addition of meso-diaminopimelic acid to the nucleotide precursor UDP-N-acetylmuramoyl-L-alanyl-D-glutamate (UMAG) in the biosynthesis of bacterial cell-wall peptidoglycan. The polypeptide is UDP-N-acetylmuramoyl-L-alanyl-D-glutamate--2,6-diaminopimelate ligase (Helicobacter hepaticus (strain ATCC 51449 / 3B1)).